The chain runs to 72 residues: Translation initiation factor IF-1 (72 aa).

The region spanning 1–72 (MSDKSIKMQA…SNGRITYRHK (72 aa)) is the S1-like domain.

The protein belongs to the IF-1 family. In terms of assembly, component of the 30S ribosomal translation pre-initiation complex which assembles on the 30S ribosome in the order IF-2 and IF-3, IF-1 and N-formylmethionyl-tRNA(fMet); mRNA recruitment can occur at any time during PIC assembly.

It is found in the cytoplasm. In terms of biological role, one of the essential components for the initiation of protein synthesis. Stabilizes the binding of IF-2 and IF-3 on the 30S subunit to which N-formylmethionyl-tRNA(fMet) subsequently binds. Helps modulate mRNA selection, yielding the 30S pre-initiation complex (PIC). Upon addition of the 50S ribosomal subunit IF-1, IF-2 and IF-3 are released leaving the mature 70S translation initiation complex. This is Translation initiation factor IF-1 from Mycoplasmopsis pulmonis (strain UAB CTIP) (Mycoplasma pulmonis).